We begin with the raw amino-acid sequence, 450 residues long: Phosphoglucosamine mutase (450 aa).

Residue S101 is the Phosphoserine intermediate of the active site. Mg(2+) contacts are provided by S101, D240, D242, and D244. Residue S101 is modified to Phosphoserine.

Belongs to the phosphohexose mutase family. Requires Mg(2+) as cofactor. In terms of processing, activated by phosphorylation.

It carries out the reaction alpha-D-glucosamine 1-phosphate = D-glucosamine 6-phosphate. Its function is as follows. Catalyzes the conversion of glucosamine-6-phosphate to glucosamine-1-phosphate. This is Phosphoglucosamine mutase from Streptococcus equi subsp. zooepidemicus (strain MGCS10565).